The chain runs to 515 residues: Bifunctional purine biosynthesis protein PurH (515 aa).

The region spanning 1 to 145 (MTKRVLISVS…KNHASVTVVV (145 aa)) is the MGS-like domain.

Belongs to the PurH family.

It catalyses the reaction (6R)-10-formyltetrahydrofolate + 5-amino-1-(5-phospho-beta-D-ribosyl)imidazole-4-carboxamide = 5-formamido-1-(5-phospho-D-ribosyl)imidazole-4-carboxamide + (6S)-5,6,7,8-tetrahydrofolate. The catalysed reaction is IMP + H2O = 5-formamido-1-(5-phospho-D-ribosyl)imidazole-4-carboxamide. It functions in the pathway purine metabolism; IMP biosynthesis via de novo pathway; 5-formamido-1-(5-phospho-D-ribosyl)imidazole-4-carboxamide from 5-amino-1-(5-phospho-D-ribosyl)imidazole-4-carboxamide (10-formyl THF route): step 1/1. The protein operates within purine metabolism; IMP biosynthesis via de novo pathway; IMP from 5-formamido-1-(5-phospho-D-ribosyl)imidazole-4-carboxamide: step 1/1. This Streptococcus pneumoniae (strain P1031) protein is Bifunctional purine biosynthesis protein PurH.